A 429-amino-acid chain; its full sequence is Malate dehydrogenase [NADP] 1, chloroplastic (429 aa).

Residues 1–40 (MGLSTAYSPVGSHLAPAPLGHRRSAQLHRPRRALLATVRC) constitute a chloroplast transit peptide. A disulfide bridge connects residues Cys-64 and Cys-69. An NADP(+)-binding site is contributed by 93 to 99 (GAAGMIS). Residues Arg-174 and Arg-180 each contribute to the substrate site. Residues Asn-187, Gln-194, and 211–213 (VGN) contribute to the NADP(+) site. Asn-213 and Arg-244 together coordinate substrate. His-269 (proton acceptor) is an active-site residue. The cysteines at positions 405 and 417 are disulfide-linked.

This sequence belongs to the LDH/MDH superfamily. MDH type 2 family. Homodimer.

The protein resides in the plastid. The protein localises to the chloroplast. The catalysed reaction is (S)-malate + NADP(+) = oxaloacetate + NADPH + H(+). Its activity is regulated as follows. Chloroplast NADP-MDH is activated upon illumination. In order to be enzymatically active, disulfide bridges on the protein must be reduced by thioredoxin which receives electrons from ferredoxin and the electron transport system of photosynthesis. Its function is as follows. The chloroplastic, NADP-dependent form is essential for the photosynthesis C4 cycle, which allows plants to circumvent the problem of photorespiration. In C4 plants, NADP-MDH activity acts to convert oxaloacetate to malate in chloroplasts of mesophyll cells for transport to the bundle sheath cells. In Sorghum bicolor (Sorghum), this protein is Malate dehydrogenase [NADP] 1, chloroplastic.